A 377-amino-acid polypeptide reads, in one-letter code: Nitric oxide reductase FlRd-NAD(+) reductase (377 aa).

Belongs to the FAD-dependent oxidoreductase family. Requires FAD as cofactor.

Its subcellular location is the cytoplasm. The catalysed reaction is 2 reduced [nitric oxide reductase rubredoxin domain] + NAD(+) + H(+) = 2 oxidized [nitric oxide reductase rubredoxin domain] + NADH. It functions in the pathway nitrogen metabolism; nitric oxide reduction. Functionally, one of at least two accessory proteins for anaerobic nitric oxide (NO) reductase. Reduces the rubredoxin moiety of NO reductase. The polypeptide is Nitric oxide reductase FlRd-NAD(+) reductase (Escherichia coli O139:H28 (strain E24377A / ETEC)).